A 104-amino-acid polypeptide reads, in one-letter code: Circadian clock oscillator protein KaiB (104 aa).

It belongs to the KaiB family. The KaiABC complex composition changes during the circadian cycle to control KaiC phosphorylation. Complexes KaiC(6), KaiA(2-4):KaiC(6), KaiB(6):KaiC(6) and KaiC(6):KaiB(6):KaiA(12) are among the most important forms, many form cooperatively. Undergoes a major conformational rearrangment; in the free state forms homotetramers as a dimer of dimers. When bound to the CI domain of KaiC switches to a monomeric thioredoxin-fold (KaiB(fs)). KaiB(fs) binds CikA, leading it to dephosphorylate phospho-RpaA.

Key component of the KaiABC oscillator complex, which constitutes the main circadian regulator in cyanobacteria. Complex composition changes during the circadian cycle to control KaiC phosphorylation. KaiA stimulates KaiC autophosphorylation, while KaiB sequesters KaiA, leading to KaiC autodephosphorylation. Phospho-Ser-431 KaiC accumulation triggers binding of KaiB to form the KaiB(6):KaiC(6) complex, leading to changes in output regulators CikA and SasA. KaiB switches to a thioredoxin-like fold (KaiB(fs)) when bound to KaiC. KaiB(6):KaiC(6) formation exposes a site for KaiA binding that sequesters KaiA from KaiC, making the KaiC(6):KaiB(6):KaiA(12) complex that results in KaiC autodephosphorylation. In terms of biological role, a metamorphic protein which reversibly switches between an inactive tetrameric fold and a rare, thioredoxin-like monomeric fold (KaiB(fs)). KaiB(fs) binds phospho-KaiC, KaiA and CikA. KaiA and CikA compete for binding to KaiB(fs), and KaiB(fs) and SasA compete for binding to KaiC, thus the clock oscillator and output signal pathway are tightly coupled. The sequence is that of Circadian clock oscillator protein KaiB from Parasynechococcus marenigrum (strain WH8102).